Consider the following 343-residue polypeptide: Flagellar motor switch protein FliG (343 aa).

The Part of the EHPQR-motif signature appears at 137-140 (EHPQ). Residues 245–248 (MFTF) carry the M-F-X-F motif; its intrinsic flexibility is probably coupled to flagellar rotation motif.

Belongs to the FliG family.

It localises to the cell inner membrane. It is found in the bacterial flagellum basal body. One of the proteins that forms a switch complex that is proposed to be located at the base of the basal body. This complex interacts with chemotaxis proteins (such as CheY) in addition to contacting components of the motor that determine the direction of flagellar rotation. Required for flagellum synthesis and motility. In H.pylori four flagellar switch proteins are encoded, FliG, FliM, FliN and FliY. The sequence is that of Flagellar motor switch protein FliG from Helicobacter pylori (strain ATCC 700392 / 26695) (Campylobacter pylori).